The primary structure comprises 179 residues: Acireductone dioxygenase (179 aa).

The Fe(2+) site is built by His99, His101, Glu105, and His143. Residues His99, His101, Glu105, and His143 each coordinate Ni(2+).

This sequence belongs to the acireductone dioxygenase (ARD) family. As to quaternary structure, monomer. Requires Fe(2+) as cofactor. Ni(2+) serves as cofactor.

The catalysed reaction is 1,2-dihydroxy-5-(methylsulfanyl)pent-1-en-3-one + O2 = 3-(methylsulfanyl)propanoate + CO + formate + 2 H(+). The enzyme catalyses 1,2-dihydroxy-5-(methylsulfanyl)pent-1-en-3-one + O2 = 4-methylsulfanyl-2-oxobutanoate + formate + 2 H(+). It participates in amino-acid biosynthesis; L-methionine biosynthesis via salvage pathway; L-methionine from S-methyl-5-thio-alpha-D-ribose 1-phosphate: step 5/6. Its function is as follows. Catalyzes 2 different reactions between oxygen and the acireductone 1,2-dihydroxy-3-keto-5-methylthiopentene (DHK-MTPene) depending upon the metal bound in the active site. Fe-containing acireductone dioxygenase (Fe-ARD) produces formate and 2-keto-4-methylthiobutyrate (KMTB), the alpha-ketoacid precursor of methionine in the methionine recycle pathway. Ni-containing acireductone dioxygenase (Ni-ARD) produces methylthiopropionate, carbon monoxide and formate, and does not lie on the methionine recycle pathway. The chain is Acireductone dioxygenase from Sulfurihydrogenibium sp. (strain YO3AOP1).